We begin with the raw amino-acid sequence, 155 residues long: IFN signaling evasion protein OPG029 (155 aa).

The protein belongs to the orthopoxvirus OPG029 family. As to quaternary structure, interacts with host TANK, TBKBP1 and AZI2; these interactions prevent interferon production. Interacts with host STAT2.

Prevents establishment of cellular antiviral state by blocking virus-induced phosphorylation and activation of interferon regulatory factors 3/IRF3 and 7/IRF7, transcription factors critical for the induction of interferons alpha and beta. This blockage is produced through the inhibition of host TBK1, by binding host TBK1 adapter proteins TBKBP1 and AZI2, thereby producing a strong inhibition of the phosphorylation and activation of IRF3 and IRF7. Also acts as an inhibitor of the cellular response to type I IFN by interacting with host STAT2. Mechanistically, exerts its inhibitory effect after host ISGF3 complex (composed of STAT1, STAT2 and IRF9) binding to the interferon stimulated response element (ISRE). The polypeptide is IFN signaling evasion protein OPG029 (OPG019) (Cynomys gunnisoni (Gunnison's prairie dog)).